The sequence spans 199 residues: MTQAAEADGAVKVVGDDITNNLSLVRDEVADTAAKVDPEQVAVLARQIVQPGRVFVAGAGRSGLVLRMAAMRLMHFGLTVHVAGDTTTPAISAGDLLLVASGSGTTSGVVKSAETAKKAGARIAAFTTNPDSPLAGLADAVVIIPAAQKTDHGSHISRQYAGSLFEQVLFVVTEAVFQSLWDHTEVEAEELWTRHANLE.

Residues 44–186 (LARQIVQPGR…FQSLWDHTEV (143 aa)) form the SIS domain. Substrate is bound by residues Ser-62 and 101-106 (SGSGTT). The Proton acceptor role is filled by Glu-166.

Belongs to the SIS family. PHI subfamily.

It carries out the reaction D-arabino-hex-3-ulose 6-phosphate = beta-D-fructose 6-phosphate. It participates in one-carbon metabolism; formaldehyde assimilation via RuMP pathway; D-fructose 6-phosphate from D-ribulose 5-phosphate and formaldehyde: step 2/2. Catalyzes the isomerization between 3-hexulose 6-phosphate and fructose 6-phosphate. The polypeptide is 3-hexulose-6-phosphate isomerase (rmpB) (Mycobacterium gastri).